The primary structure comprises 391 residues: Ectodysplasin-A (391 aa).

Over residues 1–21 (MGYPEVERREPLPAAAPRERG) the composition is skewed to basic and acidic residues. The disordered stretch occupies residues 1 to 28 (MGYPEVERREPLPAAAPRERGSQGCGCR). Residues 1-41 (MGYPEVERREPLPAAAPRERGSQGCGCRGAPARAGEGNSCR) are Cytoplasmic-facing. Residues 42 to 62 (LFLGFFGLSLALHLLTLCCYL) form a helical; Signal-anchor for type II membrane protein membrane-spanning segment. Residues 63 to 391 (ELRSELRRER…AIRLGEAPAS (329 aa)) lie on the Extracellular side of the membrane. Disordered stretches follow at residues 73-130 (GAES…SQDG) and 145-245 (SYSE…GTRE). Residues 76 to 96 (SRFSGPGTPGTSGTLSSPGGL) show a composition bias toward low complexity. The Collagen-like domain maps to 180–229 (GPPGPNGPPGPPGPPGPQGPPGIPGIPGIPGTTVMGPPGPPGPPGPQGPP). 2 stretches are compositionally biased toward pro residues: residues 181-203 (PPGP…PGIP) and 216-228 (PPGP…PQGP). A THD domain is found at 249–385 (AVVHLQGQGS…HTTFFGAIRL (137 aa)). Asn-313 carries an N-linked (GlcNAc...) asparagine glycan. The cysteines at positions 332 and 346 are disulfide-linked. The N-linked (GlcNAc...) asparagine glycan is linked to Asn-372.

The protein belongs to the tumor necrosis factor family. As to quaternary structure, homotrimer. The homotrimers may then dimerize and form higher-order oligomers. N-glycosylated. In terms of processing, processing by furin produces a secreted form.

Its subcellular location is the cell membrane. It is found in the secreted. Its function is as follows. Cytokine which is involved in epithelial-mesenchymal signaling during morphogenesis of ectodermal organs. Functions as a ligand activating the DEATH-domain containing receptors EDAR and EDA2R. Isoform A1 binds only to the receptor EDAR, while isoform A2 binds exclusively to the receptor EDA2R. May also play a role in cell adhesion. Functionally, isoform A1 binds only to the receptor EDAR, while isoform A2 binds exclusively to the receptor EDA2R. In terms of biological role, isoform A2 binds exclusively to the receptor EDA2R. The polypeptide is Ectodysplasin-A (EDA) (Bos taurus (Bovine)).